A 376-amino-acid polypeptide reads, in one-letter code: Homeobox protein extradenticle (376 aa).

Residues 1 to 37 (MEDPNRMLAHTGGMMAPQGYGLSGQDDGQNAGSENEV) are disordered. In terms of domain architecture, PBC spans 38-237 (RKQKDIGEIL…VMILRSRFLD (200 aa)). Residues 45–124 (EILQQIMSIS…EGVAGPEKGG (80 aa)) form a PBC-A region. A PBC-B region spans residues 127-237 (AAAASAAAAS…VMILRSRFLD (111 aa)). The segment at residues 238 to 300 (ARRKRRNFSK…NKRIRYKKNI (63 aa)) is a DNA-binding region (homeobox; TALE-type). Over residues 318–335 (ASPYSMAGPPSGTTTPMM) the composition is skewed to low complexity. The disordered stretch occupies residues 318-376 (ASPYSMAGPPSGTTTPMMSPAPPQDSMGYPMGSGGYDQQQPYDNSMGGYDPNLHQDLSP).

This sequence belongs to the TALE/PBX homeobox family. In terms of assembly, interacts with Ubx and hth. In terms of tissue distribution, prior to full germband retraction it is ubiquitously present, after germband retraction, mostly present in the anterior portion of the ventral nerve cord.

The protein resides in the nucleus. In terms of biological role, transcription factor which acts with the selector homeodomain proteins altering the regulation of downstream target genes such as wingless (wg), teashirt (tsh) and decapentaplegic (dpp), thus affecting segmental identity. Delimits the eye field and prevent inappropriate eye development. Required for proper localization of chordotonal organs within the peripheral nervous system. This is Homeobox protein extradenticle (exd) from Drosophila melanogaster (Fruit fly).